A 449-amino-acid polypeptide reads, in one-letter code: Cysteine--tRNA ligase (449 aa).

A Zn(2+)-binding site is contributed by Cys-30. Residues 32–42 carry the 'HIGH' region motif; it reads PTVYDRAHLGN. The Zn(2+) site is built by Cys-210, His-235, and Glu-239. Residues 268–272 carry the 'KMSKS' region motif; that stretch reads KMSKS. Residue Lys-271 coordinates ATP.

The protein belongs to the class-I aminoacyl-tRNA synthetase family. In terms of assembly, monomer. The cofactor is Zn(2+).

The protein resides in the cytoplasm. It catalyses the reaction tRNA(Cys) + L-cysteine + ATP = L-cysteinyl-tRNA(Cys) + AMP + diphosphate. This chain is Cysteine--tRNA ligase, found in Acidiphilium cryptum (strain JF-5).